The primary structure comprises 365 residues: DNA replication and repair protein RecF (365 aa).

ATP is bound at residue 30–37; that stretch reads GLNGSGKT.

This sequence belongs to the RecF family.

The protein localises to the cytoplasm. Functionally, the RecF protein is involved in DNA metabolism; it is required for DNA replication and normal SOS inducibility. RecF binds preferentially to single-stranded, linear DNA. It also seems to bind ATP. This chain is DNA replication and repair protein RecF, found in Cellvibrio japonicus (strain Ueda107) (Pseudomonas fluorescens subsp. cellulosa).